Here is a 394-residue protein sequence, read N- to C-terminus: Cysteine desulfurase IscS (394 aa).

Pyridoxal 5'-phosphate-binding positions include 72–73, N152, Q180, and 200–202; these read GT and SAH. The residue at position 203 (K203) is an N6-(pyridoxal phosphate)lysine. T238 serves as a coordination point for pyridoxal 5'-phosphate. The active-site Cysteine persulfide intermediate is the C326. Residue C326 participates in [2Fe-2S] cluster binding.

It belongs to the class-V pyridoxal-phosphate-dependent aminotransferase family. NifS/IscS subfamily. Homodimer. Forms a heterotetramer with IscU, interacts with other sulfur acceptors. The cofactor is pyridoxal 5'-phosphate.

It is found in the cytoplasm. The catalysed reaction is (sulfur carrier)-H + L-cysteine = (sulfur carrier)-SH + L-alanine. The protein operates within cofactor biosynthesis; iron-sulfur cluster biosynthesis. Functionally, master enzyme that delivers sulfur to a number of partners involved in Fe-S cluster assembly, tRNA modification or cofactor biosynthesis. Catalyzes the removal of elemental sulfur atoms from cysteine to produce alanine. Functions as a sulfur delivery protein for Fe-S cluster synthesis onto IscU, an Fe-S scaffold assembly protein, as well as other S acceptor proteins. In Dictyoglomus turgidum (strain DSM 6724 / Z-1310), this protein is Cysteine desulfurase IscS.